Reading from the N-terminus, the 204-residue chain is Glutathione S-transferase (204 aa).

Residues 3 to 80 form the GST N-terminal domain; that stretch reads PSYKLTYCPV…YLGKQFGLSG (78 aa). Glutathione is bound by residues Tyr9, Trp40, Lys44, 50–52, and 64–65; these read GKT and QS. One can recognise a GST C-terminal domain in the interval 82 to 204; sequence DDWENLEIDM…WVAKRPPTDL (123 aa).

Belongs to the GST superfamily. Sigma family.

It catalyses the reaction RX + glutathione = an S-substituted glutathione + a halide anion + H(+). The protein is Glutathione S-transferase of Blattella germanica (German cockroach).